The following is a 189-amino-acid chain: uncharacterized protein (189 aa).

This is an uncharacterized protein from Human adenovirus B serotype 7 (HAdV-7).